The chain runs to 258 residues: Pimeloyl-[acyl-carrier protein] methyl ester esterase (258 aa).

An AB hydrolase-1 domain is found at 16–242; that stretch reads LVLLHGWGLN…AAHAPFISHP (227 aa). Residues tryptophan 22, 82 to 83, and 143 to 147 each bind substrate; these read SM and FLALQ. The active-site Nucleophile is serine 82. Catalysis depends on residues aspartate 207 and histidine 235. Histidine 235 lines the substrate pocket.

This sequence belongs to the AB hydrolase superfamily. Carboxylesterase BioH family. As to quaternary structure, monomer.

It is found in the cytoplasm. It carries out the reaction 6-carboxyhexanoyl-[ACP] methyl ester + H2O = 6-carboxyhexanoyl-[ACP] + methanol + H(+). Its pathway is cofactor biosynthesis; biotin biosynthesis. In terms of biological role, the physiological role of BioH is to remove the methyl group introduced by BioC when the pimeloyl moiety is complete. It allows to synthesize pimeloyl-ACP via the fatty acid synthetic pathway through the hydrolysis of the ester bonds of pimeloyl-ACP esters. In Yersinia pseudotuberculosis serotype O:1b (strain IP 31758), this protein is Pimeloyl-[acyl-carrier protein] methyl ester esterase.